The sequence spans 431 residues: Serine hydroxymethyltransferase 3 (431 aa).

Residues leucine 131 and glycine 135–leucine 137 each bind (6S)-5,6,7,8-tetrahydrofolate. Position 240 is an N6-(pyridoxal phosphate)lysine (lysine 240).

It belongs to the SHMT family. As to quaternary structure, homodimer. Pyridoxal 5'-phosphate serves as cofactor.

It localises to the cytoplasm. It carries out the reaction (6R)-5,10-methylene-5,6,7,8-tetrahydrofolate + glycine + H2O = (6S)-5,6,7,8-tetrahydrofolate + L-serine. The protein operates within one-carbon metabolism; tetrahydrofolate interconversion. It functions in the pathway amino-acid biosynthesis; glycine biosynthesis; glycine from L-serine: step 1/1. In terms of biological role, catalyzes the reversible interconversion of serine and glycine with tetrahydrofolate (THF) serving as the one-carbon carrier. This reaction serves as the major source of one-carbon groups required for the biosynthesis of purines, thymidylate, methionine, and other important biomolecules. Also exhibits THF-independent aldolase activity toward beta-hydroxyamino acids, producing glycine and aldehydes, via a retro-aldol mechanism. This chain is Serine hydroxymethyltransferase 3, found in Colwellia psychrerythraea (strain 34H / ATCC BAA-681) (Vibrio psychroerythus).